A 316-amino-acid polypeptide reads, in one-letter code: MAEPLFLQSQMHKKIWGGNRLRKEFGYDIPSETTGEYWAISAHPNGVSVVKNGVYKGVPLDELYAEHRELFGNSKSSVFPLLTKILDANDWLSVQVHPDNAYALEHEGELGKTECWYVISADEGAEIIYGHEAKSKEELRQMIAAGDWDHLLTKIPVKAGDFFYVPSGTMHAIGKGIMILETQQSSDTTYRVYDFDRKDDQGRKRALHIEQSIDVLTIGKPANATPAWLSLQGLETTVLVSSPFFTVYKWQISGSVKMQQTAPYLLVSVLAGQGRITVGLEQYALRKGDHLILPNTIKSWQFDGDLEIIASHSNEC.

Zn(2+) is bound by residues glutamine 95, histidine 97, glutamate 114, and histidine 171. The active site involves arginine 191.

It belongs to the mannose-6-phosphate isomerase type 1 family. The cofactor is Zn(2+).

The enzyme catalyses D-mannose 6-phosphate = D-fructose 6-phosphate. This chain is Mannose-6-phosphate isomerase (pmi), found in Streptococcus mutans serotype c (strain ATCC 700610 / UA159).